The following is a 366-amino-acid chain: Dihydroorotate dehydrogenase (quinone) (366 aa).

Residues 74-78 (AGFDK) and Thr98 each bind FMN. Lys78 provides a ligand contact to substrate. Residue 123 to 127 (NRMGF) coordinates substrate. 2 residues coordinate FMN: Asn156 and Asn189. Position 189 (Asn189) interacts with substrate. Ser192 (nucleophile) is an active-site residue. Asn194 provides a ligand contact to substrate. FMN-binding residues include Lys231 and Thr259. 260–261 (NT) lines the substrate pocket. Residues Gly285, Gly314, and 335 to 336 (YT) contribute to the FMN site.

The protein belongs to the dihydroorotate dehydrogenase family. Type 2 subfamily. As to quaternary structure, monomer. It depends on FMN as a cofactor.

Its subcellular location is the cell membrane. It carries out the reaction (S)-dihydroorotate + a quinone = orotate + a quinol. It participates in pyrimidine metabolism; UMP biosynthesis via de novo pathway; orotate from (S)-dihydroorotate (quinone route): step 1/1. Catalyzes the conversion of dihydroorotate to orotate with quinone as electron acceptor. In Kineococcus radiotolerans (strain ATCC BAA-149 / DSM 14245 / SRS30216), this protein is Dihydroorotate dehydrogenase (quinone).